Reading from the N-terminus, the 117-residue chain is Large ribosomal subunit protein bL20 (117 aa).

Belongs to the bacterial ribosomal protein bL20 family.

Binds directly to 23S ribosomal RNA and is necessary for the in vitro assembly process of the 50S ribosomal subunit. It is not involved in the protein synthesizing functions of that subunit. The polypeptide is Large ribosomal subunit protein bL20 (Magnetococcus marinus (strain ATCC BAA-1437 / JCM 17883 / MC-1)).